Here is a 676-residue protein sequence, read N- to C-terminus: SPARC-like protein 1 (676 aa).

Positions 1–16 are cleaved as a signal peptide; it reads MKTVLLLICLLGSAFT. Residues 35–44 show a composition bias toward basic and acidic residues; sequence EKHKYTHSEM. Disordered regions lie at residues 35-151, 173-369, and 385-437; these read EKHK…WALR, NTVG…GVYR, and SEDN…RNST. Positions 95 to 108 are enriched in polar residues; that stretch reads KNSLRSINFLTLHS. Asn-182 carries N-linked (GlcNAc...) asparagine glycosylation. Residues 184–202 are compositionally biased toward acidic residues; sequence SEEEEAGEEEDEEWGEETD. Composition is skewed to basic and acidic residues over residues 249–266 and 273–291; these read EKFSMEEESQEKLYKEGK and NHNEDQGEKRQSEESKEHF. Positions 312-328 are enriched in acidic residues; it reads NAEEDDNDSGDDGEEDL. The N-linked (GlcNAc...) asparagine glycan is linked to Asn-318. Positions 385-394 are enriched in basic and acidic residues; the sequence is SEDNHYHHEP. Asn-396 carries N-linked (GlcNAc...) asparagine glycosylation. The segment covering 397 to 408 has biased composition (low complexity); that stretch reads SSSKQQLQTSSS. Asn-413 carries an N-linked (GlcNAc...) asparagine glycan. A compositionally biased stretch (basic and acidic residues) spans 415–433; the sequence is TEHEDEVKTTGGSYHEESA. N-linked (GlcNAc...) asparagine glycosylation is present at Asn-435. Positions 444–466 constitute a Follistatin-like domain; it reads LCRNFHCKRGKVCQADKQGKPSC. 7 disulfides stabilise this stretch: Cys-445/Cys-456, Cys-450/Cys-466, Cys-468/Cys-502, Cys-474/Cys-495, Cys-484/Cys-521, Cys-527/Cys-638, and Cys-646/Cys-662. The 62-residue stretch at 462–523 folds into the Kazal-like domain; the sequence is GKPSCICQDP…HLDYMGACKH (62 aa). An N-linked (GlcNAc...) asparagine glycan is attached at Asn-488. The EF-hand domain maps to 634–669; the sequence is PMEHCITRFFQECDGDQDKLITLKEWCHCFAIKEED. 4 residues coordinate Ca(2+): Asp-647, Asp-649, Asp-651, and Glu-658.

The protein belongs to the SPARC family. In terms of tissue distribution, glial (Mueller) cells of the neuroretina.

The protein localises to the secreted. It localises to the extracellular space. The protein resides in the extracellular matrix. Its function is as follows. Could play a role in the late stage of neuroretina morphogenesis. The protein is SPARC-like protein 1 (SPARCL1) of Coturnix japonica (Japanese quail).